A 380-amino-acid polypeptide reads, in one-letter code: Queuine tRNA-ribosyltransferase (380 aa).

D93 serves as the catalytic Proton acceptor. Substrate-binding positions include 93-97 (DSGGF), D147, Q198, and G225. The segment at 256 to 262 (GVGLPSN) is RNA binding. The active-site Nucleophile is the D275. Positions 280 to 284 (ARNGR) are RNA binding; important for wobble base 34 recognition. Residues C313, C315, C318, and H344 each contribute to the Zn(2+) site.

The protein belongs to the queuine tRNA-ribosyltransferase family. As to quaternary structure, homodimer. Within each dimer, one monomer is responsible for RNA recognition and catalysis, while the other monomer binds to the replacement base PreQ1. It depends on Zn(2+) as a cofactor.

The catalysed reaction is 7-aminomethyl-7-carbaguanine + guanosine(34) in tRNA = 7-aminomethyl-7-carbaguanosine(34) in tRNA + guanine. The protein operates within tRNA modification; tRNA-queuosine biosynthesis. In terms of biological role, catalyzes the base-exchange of a guanine (G) residue with the queuine precursor 7-aminomethyl-7-deazaguanine (PreQ1) at position 34 (anticodon wobble position) in tRNAs with GU(N) anticodons (tRNA-Asp, -Asn, -His and -Tyr). Catalysis occurs through a double-displacement mechanism. The nucleophile active site attacks the C1' of nucleotide 34 to detach the guanine base from the RNA, forming a covalent enzyme-RNA intermediate. The proton acceptor active site deprotonates the incoming PreQ1, allowing a nucleophilic attack on the C1' of the ribose to form the product. After dissociation, two additional enzymatic reactions on the tRNA convert PreQ1 to queuine (Q), resulting in the hypermodified nucleoside queuosine (7-(((4,5-cis-dihydroxy-2-cyclopenten-1-yl)amino)methyl)-7-deazaguanosine). The chain is Queuine tRNA-ribosyltransferase from Clostridium perfringens (strain ATCC 13124 / DSM 756 / JCM 1290 / NCIMB 6125 / NCTC 8237 / Type A).